A 1165-amino-acid chain; its full sequence is Transient receptor potential cation channel subfamily M member 5 (1165 aa).

The Cytoplasmic segment spans residues methionine 1–alanine 715. Serine 121 bears the Phosphoserine mark. 5 residues coordinate Ca(2+): glutamate 212, cysteine 324, aspartate 333, aspartate 336, and glutamate 337. The helical transmembrane segment at proline 716–leucine 740 threads the bilayer. Residues aspartate 741–serine 751 lie on the Extracellular side of the membrane. A helical transmembrane segment spans residues alanine 752–glutamine 771. Residues glutamate 768 and glutamine 771 each contribute to the Ca(2+) site. Residues serine 772–asparagine 792 lie on the Cytoplasmic side of the membrane. Residues tryptophan 793–arginine 811 traverse the membrane as a helical segment. Positions 794 and 797 each coordinate Ca(2+). Residues methionine 812–glutamate 818 lie on the Extracellular side of the membrane. Residues alanine 819 to isoleucine 841 traverse the membrane as a helical segment. The Cytoplasmic segment spans residues histidine 842–isoleucine 850. Residues isoleucine 851–leucine 880 traverse the membrane as a helical segment. Over leucine 881 to aspartate 889 the chain is Extracellular. The pore-forming intramembrane region spans tryptophan 890 to isoleucine 930. The Selectivity filter motif lies at phenylalanine 904 to glutamine 906. At leucine 931–alanine 942 the chain is on the extracellular side. The helical transmembrane segment at asparagine 943–glutamine 977 threads the bilayer. The Cytoplasmic segment spans residues glutamate 978–histidine 1165. Glutamate 994 provides a ligand contact to Ca(2+). Residues arginine 1122–histidine 1165 form a disordered region. Residues alanine 1132–glutamine 1141 are compositionally biased toward polar residues. Over residues threonine 1156–histidine 1165 the composition is skewed to basic and acidic residues.

Belongs to the transient receptor (TC 1.A.4) family. LTrpC subfamily. TRPM5 sub-subfamily. In terms of assembly, homotetramer.

The protein resides in the cell membrane. It carries out the reaction Na(+)(in) = Na(+)(out). The catalysed reaction is K(+)(in) = K(+)(out). With respect to regulation, ca(2+)-activated cation channel. Displays voltage dependence modulation. Regulated by PI(4,5)P2 levels. PI(4,5)P 2 reverses the Ca(2+) -induced desensitization of channels. Is highly temperature-sensitive. Functionally, monovalent cation-selective ion channel activated by intracellular Ca(2+) in a voltage- and temperature-dependent manner. Mediates the transport of Na(+), K(+) and Cs(+) ions equally well. Activated directly by increase in intracellular Ca(2+), but is impermeable to it. The activation mechanism of TRPM5 involves a multistep process. TRPM5 activation involves ligand binding (i.e., tastant molecule, glucose stimulation) to Gq/G-protein coupled receptors (GPCR) and leads to the breakdown of phosphatidylinositol bisphosphate (PIP2) into diacylglycerol (DAG) and inositol trisphosphate (IP3), IP3 binds to its receptors in the endoplasmic reticulum and cause Ca(2+) release. Simultaneously with the intracellular Ca(2+) release, DAG activates the protein kinase C (PKC), which phosphorylates the TRPM5 channel. This phosphorylation combined with the bound Ca(2+), leads to a robust inward current allowing the entry of sodium ions (Na+) into the cell. This ion influx depolarizes the cell membrane, generating action potentials that propagate TRPM5 signals. The sequence is that of Transient receptor potential cation channel subfamily M member 5 from Danio rerio (Zebrafish).